A 1562-amino-acid polypeptide reads, in one-letter code: Pikromycin polyketide synthase component PikAIII (1562 aa).

The Ketosynthase family 3 (KS3) domain occupies 34–464 (HEPVAIVGMA…GTNAHVVLEE (431 aa)). The module 5 stretch occupies residues 37–1475 (VAIVGMACRL…TPAALAAHLH (1439 aa)). Cys-209 (acyl-thioester intermediate; for beta-ketoacyl synthase activity) is an active-site residue. Catalysis depends on for beta-ketoacyl synthase activity residues His-344 and His-384. The acyltransferase stretch occupies residues 565-866 (FVFPGQGTQW…GGQERLVTSL (302 aa)). Ser-655 (acyl-ester intermediate; for acyltransferase activity) is an active-site residue. The tract at residues 1116–1293 (GTVLITGGTG…ATSVAWGLWA (178 aa)) is beta-ketoacyl reductase. NADP(+) contacts are provided by residues 1124 to 1127 (TGAL), 1147 to 1150 (SRSG), 1176 to 1177 (DV), Lys-1226, and 1248 to 1249 (YS). The Acyl-ester intermediate; for beta-ketoacyl reductase activity role is filled by Tyr-1263. In terms of domain architecture, Carrier spans 1403–1478 (PALLTLVRTH…ALAAHLHEAY (76 aa)). Ser-1438 carries the post-translational modification O-(pantetheine 4'-phosphoryl)serine. The interval 1519-1548 (GIEPEPGSGGSDGGAADPGAEPEASIDDLD) is disordered. The span at 1532–1541 (GAADPGAEPE) shows a compositional bias: low complexity.

In terms of assembly, homodimer. Pikromycin PKS consists of a combination of multimodular (PikAI and PikAII) and monomodular (PikAIII and PikAIV) polypeptides each coding for a functional synthase subunit which participates in 1 (monomodular) or 2 (multimodular) of the six FAS-like elongation steps required for formation of the polyketide. Module 1, 2, 3, 4, 5, and 6 participating in biosynthesis steps 1, 2, 3, 4, 5, and 6, respectively. Pantetheine 4'-phosphate serves as cofactor.

The enzyme catalyses 5 (S)-methylmalonyl-CoA + malonyl-CoA + 5 NADPH + 11 H(+) = 10-deoxymethynolide + 6 CO2 + 5 NADP(+) + 6 CoA + 2 H2O. The catalysed reaction is 6 (S)-methylmalonyl-CoA + malonyl-CoA + 5 NADPH + 12 H(+) = narbonolide + 7 CO2 + 5 NADP(+) + 7 CoA + 2 H2O. Its pathway is antibiotic biosynthesis. Involved in the biosynthesis of 12- and 14-membered ring macrolactone antibiotics such as methymycin and neomethymycin, and pikromycin and narbomycin, respectively. Component of the pikromycin PKS which catalyzes the biosynthesis of both precursors 10-deoxymethynolide (12-membered ring macrolactone) and narbonolide (14-membered ring macrolactone). Chain elongation through PikAI, PikAII and PikAIII followed by thioesterase catalyzed termination results in the production of 10-deoxymethynolide, while continued elongation through PikAIV, followed by thioesterase (TE) catalyzed cyclization results in the biosynthesis of the narbonolide. The chain is Pikromycin polyketide synthase component PikAIII from Streptomyces venezuelae.